The following is a 185-amino-acid chain: GTP cyclohydrolase 1 (185 aa).

Positions 75, 78, and 146 each coordinate Zn(2+).

The protein belongs to the GTP cyclohydrolase I family. Homomer.

The catalysed reaction is GTP + H2O = 7,8-dihydroneopterin 3'-triphosphate + formate + H(+). Its pathway is cofactor biosynthesis; 7,8-dihydroneopterin triphosphate biosynthesis; 7,8-dihydroneopterin triphosphate from GTP: step 1/1. In Clostridium kluyveri (strain NBRC 12016), this protein is GTP cyclohydrolase 1.